Consider the following 116-residue polypeptide: MSAVEQHIPNDQFLQKLTAFYRDSKIRGPKSVYVTMKPYDGRTKAMPKGSTFKEGDEISCIFRAKWGSKKIATEVKAKEVNKFHTQYSAIIVAQMVNLEKRKKTDDEKKKTGATKA.

Belongs to the SRP14 family. As to quaternary structure, heterodimer with ZK512.4/SRP9; binds RNA as heterodimer. Component of a signal recognition particle (SRP) complex that consists of a 7SL RNA molecule of 300 nucleotides and six protein subunits: srpa-72, srpa-68, SRP54, F37F2.2/SRP19, F25G6.8/SRP14 and ZK512.4/SRP9.

It localises to the cytoplasm. Functionally, component of the signal recognition particle (SRP) complex, a ribonucleoprotein complex that mediates the cotranslational targeting of secretory and membrane proteins to the endoplasmic reticulum (ER). F37F2.2/srpa-19 together with F25G6.8/srpa-14 and the Alu portion of the SRP RNA, constitutes the elongation arrest domain of SRP. The complex of F37F2.2/srpa-19 and F25G6.8/srpa-14 is required for SRP RNA binding. The chain is Signal recognition particle 14 kDa protein from Caenorhabditis elegans.